Consider the following 287-residue polypeptide: Bifunctional protein FolD (287 aa).

Residues 166–168 (GAS) and isoleucine 232 contribute to the NADP(+) site.

It belongs to the tetrahydrofolate dehydrogenase/cyclohydrolase family. Homodimer.

The enzyme catalyses (6R)-5,10-methylene-5,6,7,8-tetrahydrofolate + NADP(+) = (6R)-5,10-methenyltetrahydrofolate + NADPH. It catalyses the reaction (6R)-5,10-methenyltetrahydrofolate + H2O = (6R)-10-formyltetrahydrofolate + H(+). Its pathway is one-carbon metabolism; tetrahydrofolate interconversion. Functionally, catalyzes the oxidation of 5,10-methylenetetrahydrofolate to 5,10-methenyltetrahydrofolate and then the hydrolysis of 5,10-methenyltetrahydrofolate to 10-formyltetrahydrofolate. The sequence is that of Bifunctional protein FolD from Chromohalobacter salexigens (strain ATCC BAA-138 / DSM 3043 / CIP 106854 / NCIMB 13768 / 1H11).